A 244-amino-acid chain; its full sequence is Large ribosomal subunit protein uL30 (244 aa).

The interval 1–37 (MAPTKKVPQVPETVLKRRKQRADARTKAAQHKVTVAA) is disordered.

Belongs to the universal ribosomal protein uL30 family.

Functionally, binds to G-rich structures in 28S rRNA and in mRNAs. Plays a regulatory role in the translation apparatus; inhibits cell-free translation of mRNAs. The sequence is that of Large ribosomal subunit protein uL30 (rpl-7) from Caenorhabditis elegans.